The chain runs to 202 residues: N-acetyltransferase 9-like protein (202 aa).

One can recognise an N-acetyltransferase domain in the interval 34-184 (EEIRRLTGSE…FTFELPKNRL (151 aa)).

The protein belongs to the acetyltransferase family. GNAT subfamily.

The protein is N-acetyltransferase 9-like protein of Caenorhabditis elegans.